We begin with the raw amino-acid sequence, 401 residues long: MSLEELEAMDQSNPGEFLERVREKIRMLNSETRILQSRVNTIKHDISTKNASIAENMERIRLNKQLPYLVGNVVEVLDEHSGVVNASTRMSSYLPITGLIPNSELRPGDLVALHKDTNIVFEKLPPDYDMKVGGMVLKSDAKPDETYEDIGGLERQIEELNEAIVLSLTHPERFEKLNIKPPKGVLMYGPPGTGKTLMARACASKTNATFLKLAGPQLVQMYIGDGARLVRDAFALAKERKPTIIFIDEIDAIGAKRSDSDQTGDREVQRTMLELLNQLDGFSSSEEVKIIAATNRVDILDPALLRSGRLDRKIEFPLPNTLGRKRILQIHARKMSVRDDVNFDELARSTEGFNGAQCKAVCVEAGMAALRKEKTEISQNDFMDGIQEVLSRKKSKLLYFT.

189-196 (GPPGTGKT) is an ATP binding site.

It belongs to the AAA ATPase family. The 26S proteasome consists of a 20S proteasome core and two 19S regulatory subunits. The 20S proteasome core is composed of 28 subunits that are arranged in four stacked rings, resulting in a barrel-shaped structure. The two end rings are each formed by seven alpha subunits, and the two central rings are each formed by seven beta subunits. The catalytic chamber with the active sites is on the inside of the barrel.

The protein resides in the cytoplasm. Its subcellular location is the nucleus. In terms of biological role, acts as a regulatory subunit of the 26S proteasome which degrades poly-ubiquitinated proteins in the cytoplasm and in the nucleus. It is essential for the regulated turnover of proteins and for the removal of misfolded proteins. The proteasome is a multicatalytic proteinase complex that is characterized by its ability to cleave peptides with Arg, Phe, Tyr, Leu, and Glu adjacent to the leaving group at neutral or slightly basic pH. This chain is 26S proteasome regulatory subunit 6A (RPT5), found in Encephalitozoon cuniculi (strain GB-M1) (Microsporidian parasite).